Reading from the N-terminus, the 462-residue chain is Nitrate/nitrite transporter NarU (462 aa).

The Cytoplasmic segment spans residues 1 to 35 (MALQNEKNSRYLLRDWKPENPAFWENKGKHIARRN). A helical transmembrane segment spans residues 36 to 56 (LWISVSCLLLAFCVWMLFSAV). Residues 57–76 (TVNLNKIGFNFTTDQLFLLT) are Periplasmic-facing. A helical transmembrane segment spans residues 77–97 (ALPSVSGALLRVPYSFMVPIF). Residues 98 to 101 (GGRR) are Cytoplasmic-facing. Residues 102–122 (WTVFSTAILIIPCVWLGIAVQ) form a helical membrane-spanning segment. Topologically, residues 123–125 (NPN) are periplasmic. The chain crosses the membrane as a helical span at residues 126-146 (TPFGIFIVIALLCGFAGANFA). Over 147-180 (SSMGNISFFFPKAKQGSALGINGGLGNLGVSVMQ) the chain is Cytoplasmic. Residues 181–201 (LVAPLVIFVPVFAFLGVNGVP) form a helical membrane-spanning segment. The Periplasmic segment spans residues 202–206 (QADGS). A helical transmembrane segment spans residues 207–227 (VMSLANAAWIWVPLLAIATIA). The Cytoplasmic segment spans residues 228 to 258 (AWSGMNDIASSRASIADQLPVLQRLHLWLLS). Residues 259 to 279 (LLYLATFGSFIGFSAGFAMLA) traverse the membrane as a helical segment. The Periplasmic segment spans residues 280-287 (KTQFPDVN). Residues 288-308 (ILRLAFFGPFIGAIARSVGGA) traverse the membrane as a helical segment. Topologically, residues 309-317 (ISDKFGGVR) are cytoplasmic. The chain crosses the membrane as a helical span at residues 318-338 (VTLINFIFMAIFSALLFLTLP). Over 339 to 344 (GTGSGN) the chain is Periplasmic. The helical transmembrane segment at 345-365 (FIAFYAVFMGLFLTAGLGSGS) threads the bilayer. Topologically, residues 366–401 (TFQMIAVIFRQITIYRVKMKGGSDEQAHKEAVTETA) are cytoplasmic. Residues 402–422 (AALGFISAIGAVGGFFIPQAF) form a helical membrane-spanning segment. The Periplasmic portion of the chain corresponds to 423–432 (GMSLNMTGSP). Residues 433 to 453 (VGAMKVFLIFYIVCVLLTWLV) traverse the membrane as a helical segment. Topologically, residues 454–462 (YGRRKFSQK) are cytoplasmic.

It belongs to the major facilitator superfamily. Nitrate/nitrite porter (TC 2.A.1.8) family.

The protein localises to the cell inner membrane. In terms of biological role, catalyzes nitrate uptake, nitrite uptake and nitrite export across the cytoplasmic membrane. May function as a nitrate/H(+) and nitrite/H(+) channel. Could confer a selective advantage during severe nutrient starvation or slow growth. The polypeptide is Nitrate/nitrite transporter NarU (narU) (Escherichia coli (strain K12)).